The following is a 214-amino-acid chain: Heat shock protein 30 (214 aa).

The 118-residue stretch at 66–183 (VPSSLTIQPV…AERVVPINCS (118 aa)) folds into the sHSP domain. Positions 193-214 (SKTEGSITDTQKKQENTISKED) are disordered. Positions 202-214 (TQKKQENTISKED) are enriched in basic and acidic residues.

It belongs to the small heat shock protein (HSP20) family.

This chain is Heat shock protein 30 (hsp30), found in Oncorhynchus tshawytscha (Chinook salmon).